The following is a 216-amino-acid chain: Somatotropin (216 aa).

The signal sequence occupies residues M1–A26. H45 contacts Zn(2+). C78 and C189 form a disulfide bridge. S131 carries the phosphoserine modification. Position 198 (E198) interacts with Zn(2+). C206 and C214 are oxidised to a cystine.

The protein belongs to the somatotropin/prolactin family.

The protein localises to the secreted. In terms of biological role, plays an important role in growth control. Its major role in stimulating body growth is to stimulate the liver and other tissues to secrete IGF1. It stimulates both the differentiation and proliferation of myoblasts. It also stimulates amino acid uptake and protein synthesis in muscle and other tissues. The polypeptide is Somatotropin (GH1) (Oryctolagus cuniculus (Rabbit)).